Consider the following 544-residue polypeptide: Membrane protein insertase YidC (544 aa).

Residues 4-24 (KALLALVLSAAVLLIYQIFIY) form a helical membrane-spanning segment. The segment at 44 to 78 (NPAAPVSPQTPADEPSSGSAANPETAAALPVDGTE) is disordered. The next 3 helical transmembrane spans lie at 363–383 (NYGI…WPLG), 434–454 (LPMI…LYAI), and 508–528 (PVIF…YWLF).

Belongs to the OXA1/ALB3/YidC family. Type 1 subfamily. Interacts with the Sec translocase complex via SecD. Specifically interacts with transmembrane segments of nascent integral membrane proteins during membrane integration.

The protein resides in the cell inner membrane. Required for the insertion and/or proper folding and/or complex formation of integral membrane proteins into the membrane. Involved in integration of membrane proteins that insert both dependently and independently of the Sec translocase complex, as well as at least some lipoproteins. Aids folding of multispanning membrane proteins. This chain is Membrane protein insertase YidC, found in Syntrophus aciditrophicus (strain SB).